The following is a 211-amino-acid chain: Small ribosomal subunit protein uS3 (211 aa).

The region spanning 38–106 (LRKFIKKAFY…NIELNIIEVK (69 aa)) is the KH type-2 domain.

It belongs to the universal ribosomal protein uS3 family. In terms of assembly, part of the 30S ribosomal subunit. Forms a tight complex with proteins S10 and S14.

Binds the lower part of the 30S subunit head. Binds mRNA in the 70S ribosome, positioning it for translation. The sequence is that of Small ribosomal subunit protein uS3 from Ehrlichia ruminantium (strain Welgevonden).